Reading from the N-terminus, the 2195-residue chain is Integrator complex subunit 1 (2195 aa).

The segment at 1 to 86 (MNRAKPTTVR…RPKLSSTPPL (86 aa)) is disordered. A Phosphoserine modification is found at Ser13. Residues 34–45 (GQASESKTTSTL) show a composition bias toward polar residues. Lys47 is modified (N6-acetyllysine). A compositionally biased stretch (low complexity) spans 62–75 (SASLSGTSALTGLT). Thr83 bears the Phosphothreonine mark. Position 87 is a phosphoserine (Ser87). Residues 267–297 (LLQGEGARSGGELGAGSSPHPSLTEEEDSQT) form a disordered region. A phosphoserine mark is found at Ser307 and Ser926. The tract at residues 923–947 (STASGEEDDEGESREQKAKKRQRQQ) is disordered. The chain crosses the membrane as a helical span at residues 1165–1185 (HILVVHAMVILLTLGPPRSGD). Residues 1313–1347 (SLPPRRDSTEAPKPESSPEPPPGQGRTRAGTQVPV) form a disordered region. A compositionally biased stretch (basic and acidic residues) spans 1316–1325 (PRRDSTEAPK). 3 positions are modified to phosphoserine: Ser1320, Ser1328, and Ser1329.

The protein belongs to the Integrator subunit 1 family. Component of the Integrator complex, composed of core subunits INTS1, INTS2, INTS3, INTS4, INTS5, INTS6, INTS7, INTS8, INTS9/RC74, INTS10, INTS11/CPSF3L, INTS12, INTS13, INTS14 and INTS15. The core complex associates with protein phosphatase 2A subunits PPP2CA and PPP2R1A, to form the Integrator-PP2A (INTAC) complex. Interacts with ESRRB, ESRRB is not a core component of the Integrator complex and this association is a bridge for the interaction with the multiprotein complex Integrator; attracts the transcriptional machinery.

The protein resides in the nucleus. Its subcellular location is the nucleus membrane. Its function is as follows. Component of the integrator complex, a multiprotein complex that terminates RNA polymerase II (Pol II) transcription in the promoter-proximal region of genes. The integrator complex provides a quality checkpoint during transcription elongation by driving premature transcription termination of transcripts that are unfavorably configured for transcriptional elongation: the complex terminates transcription by (1) catalyzing dephosphorylation of the C-terminal domain (CTD) of Pol II subunit POLR2A/RPB1 and SUPT5H/SPT5, (2) degrading the exiting nascent RNA transcript via endonuclease activity and (3) promoting the release of Pol II from bound DNA. The integrator complex is also involved in terminating the synthesis of non-coding Pol II transcripts, such as enhancer RNAs (eRNAs), small nuclear RNAs (snRNAs), telomerase RNAs and long non-coding RNAs (lncRNAs). Within the integrator complex, INTS1 is involved in the post-termination step: INTS1 displaces INTS3 and the SOSS factors, allowing the integrator complex to return to the closed conformation, ready to bind to the paused elongation complex for another termination cycle. Mediates recruitment of cytoplasmic dynein to the nuclear envelope, probably as component of the integrator complex. This chain is Integrator complex subunit 1, found in Mus musculus (Mouse).